The chain runs to 213 residues: DPNSPQYLGDLFSWSAIGARTTESQTHREMASGLSMPVGFKNGTDGSLGTAINAMRAAAMPHRFVGINQAGQVCLLQTQGNPDGHVILRGGKAPNYGPEDVAQCEKEMLKAGLRPALMIDCSHGNSNKDYSRQPGVAESAIAQIKDGNRSIIGLMLESHINEGNQSSEQPRSEMKYGVSVTDACINWEVTETLLREMHQDLQGVLSARLSQEV.

The protein belongs to the class-I DAHP synthase family.

The catalysed reaction is D-erythrose 4-phosphate + phosphoenolpyruvate + H2O = 7-phospho-2-dehydro-3-deoxy-D-arabino-heptonate + phosphate. It functions in the pathway metabolic intermediate biosynthesis; chorismate biosynthesis; chorismate from D-erythrose 4-phosphate and phosphoenolpyruvate: step 1/7. Functionally, stereospecific condensation of phosphoenolpyruvate (PEP) and D-erythrose-4-phosphate (E4P) giving rise to 3-deoxy-D-arabino-heptulosonate-7-phosphate (DAHP). This chain is Phospho-2-dehydro-3-deoxyheptonate aldolase, Tyr-sensitive (aroF), found in Enterobacter agglomerans (Erwinia herbicola).